Consider the following 201-residue polypeptide: Bradykinin potentiating and C-type natriuretic peptides (201 aa).

The signal sequence occupies residues M1–G23. A propeptide spanning residues K24–S47 is cleaved from the precursor. Pyrrolidone carboxylic acid is present on Q48. Positions L58 to V60 are excised as a propeptide. Residue Q61 is modified to Pyrrolidone carboxylic acid. 2 propeptides span residues T67–D95 and G107–K179. Positions P90–R172 are disordered. The span at S120 to S130 shows a compositional bias: low complexity. Positions P132–Q142 are enriched in basic and acidic residues. Gly residues predominate over residues P159–A170. C185 and C201 are oxidised to a cystine.

The protein in the N-terminal section; belongs to the bradykinin-potentiating peptide family. This sequence in the central section; belongs to the bradykinin inhibitor peptide family. It in the C-terminal section; belongs to the natriuretic peptide family. As to expression, venom gland.

Its subcellular location is the secreted. In terms of biological role, inhibits the activity of the angiotensin-converting enzyme (ACE) by a preferential interaction with its C-domain. May also potentiate the hypotensive effects of bradykinin. Its function is as follows. Antagonizes the vasodilatory actions of bradykinin at the B2 bradykinin receptor. Has a vasorelaxant activity in rat aortic strips and a diuretic potency in anesthetized rats. May act by activating natriuretic receptors (NPR1 and/or NPR2). This chain is Bradykinin potentiating and C-type natriuretic peptides, found in Sistrurus catenatus edwardsii (Desert massasauga).